A 478-amino-acid polypeptide reads, in one-letter code: Tubulin gamma chain (478 aa).

141–147 (AGGTGSG) lines the GTP pocket. The interval 451–478 (ISQKESSSLANENGNGANNKPGKSAMAL) is disordered. Residues 459–468 (LANENGNGAN) are compositionally biased toward polar residues.

It belongs to the tubulin family.

It localises to the cytoplasm. Its subcellular location is the cytoskeleton. It is found in the microtubule organizing center. The protein localises to the centrosome. Its function is as follows. Tubulin is the major constituent of microtubules. The gamma chain is found at microtubule organizing centers (MTOC) such as the spindle poles or the centrosome, suggesting that it is involved in the minus-end nucleation of microtubule assembly. The sequence is that of Tubulin gamma chain from Reticulomyxa filosa.